Consider the following 150-residue polypeptide: 3-dehydroquinate dehydratase (150 aa).

The active-site Proton acceptor is the Tyr-26. Substrate-binding residues include Asn-77, His-83, and Asp-90. His-103 acts as the Proton donor in catalysis. Substrate is bound by residues Leu-104–Ser-105 and Arg-114.

It belongs to the type-II 3-dehydroquinase family. As to quaternary structure, homododecamer.

The catalysed reaction is 3-dehydroquinate = 3-dehydroshikimate + H2O. Its pathway is metabolic intermediate biosynthesis; chorismate biosynthesis; chorismate from D-erythrose 4-phosphate and phosphoenolpyruvate: step 3/7. Its function is as follows. Catalyzes a trans-dehydration via an enolate intermediate. The sequence is that of 3-dehydroquinate dehydratase from Klebsiella pneumoniae (strain 342).